A 124-amino-acid chain; its full sequence is Replication restart protein PriB (124 aa).

Residues Ile12–Asp112 enclose the SSB domain.

The protein belongs to the PriB family. Homodimer. Interacts with PriA and DnaT. Component of the replication restart primosome. Primosome assembly occurs via a 'hand-off' mechanism. PriA binds to replication forks, subsequently PriB then DnaT bind; DnaT then displaces ssDNA to generate the helicase loading substrate.

Functionally, involved in the restart of stalled replication forks, which reloads the replicative helicase on sites other than the origin of replication; the PriA-PriB pathway is the major replication restart pathway. During primosome assembly it facilitates complex formation between PriA and DnaT on DNA; stabilizes PriA on DNA. Stimulates the DNA unwinding activity of PriA helicase. This is Replication restart protein PriB from Haemophilus ducreyi (strain 35000HP / ATCC 700724).